A 144-amino-acid chain; its full sequence is Small ribosomal subunit protein uS12 (144 aa).

Asp-103 bears the 3-methylthioaspartic acid mark. Residues 121–144 form a disordered region; sequence VANRKQGRSKYGTKKASAVPAKKK.

It belongs to the universal ribosomal protein uS12 family. Part of the 30S ribosomal subunit. Contacts proteins S8 and S17. May interact with IF1 in the 30S initiation complex.

Its function is as follows. With S4 and S5 plays an important role in translational accuracy. Functionally, interacts with and stabilizes bases of the 16S rRNA that are involved in tRNA selection in the A site and with the mRNA backbone. Located at the interface of the 30S and 50S subunits, it traverses the body of the 30S subunit contacting proteins on the other side and probably holding the rRNA structure together. The combined cluster of proteins S8, S12 and S17 appears to hold together the shoulder and platform of the 30S subunit. In Roseiflexus castenholzii (strain DSM 13941 / HLO8), this protein is Small ribosomal subunit protein uS12.